Reading from the N-terminus, the 269-residue chain is Eukaryotic translation initiation factor 3 subunit G-1 (269 aa).

Residues 188 to 266 (AAIRISNLSE…LILSVEWSKP (79 aa)) form the RRM domain.

Belongs to the eIF-3 subunit G family. As to quaternary structure, component of the eukaryotic translation initiation factor 3 (eIF-3) complex. The eIF-3 complex interacts with pix.

The protein localises to the cytoplasm. RNA-binding component of the eukaryotic translation initiation factor 3 (eIF-3) complex, which is involved in protein synthesis of a specialized repertoire of mRNAs and, together with other initiation factors, stimulates binding of mRNA and methionyl-tRNAi to the 40S ribosome. The eIF-3 complex specifically targets and initiates translation of a subset of mRNAs involved in cell proliferation. This subunit can bind 18S rRNA. The polypeptide is Eukaryotic translation initiation factor 3 subunit G-1 (Drosophila sechellia (Fruit fly)).